Consider the following 541-residue polypeptide: Solute carrier family 22 member 10 (541 aa).

The Cytoplasmic segment spans residues methionine 1–arginine 15. Residues phenylalanine 16 to leucine 36 form a helical membrane-spanning segment. The Extracellular portion of the chain corresponds to leucine 37–lysine 145. Asparagine 56 and asparagine 102 each carry an N-linked (GlcNAc...) asparagine glycan. Residues serine 146 to valine 166 traverse the membrane as a helical segment. Over serine 167–alanine 193 the chain is Cytoplasmic. Residues proline 194–isoleucine 214 traverse the membrane as a helical segment. Topologically, residues serine 215–lysine 230 are extracellular. A helical transmembrane segment spans residues alanine 231–leucine 251. The Cytoplasmic segment spans residues alanine 252–glutamine 259. The helical transmembrane segment at threonine 260–valine 280 threads the bilayer. The Extracellular portion of the chain corresponds to glutamate 281–arginine 349. A helical membrane pass occupies residues isoleucine 350 to asparagine 370. At leucine 371–asparagine 377 the chain is on the cytoplasmic side. The chain crosses the membrane as a helical span at residues isoleucine 378–leucine 398. Topologically, residues threonine 399–arginine 406 are extracellular. The chain crosses the membrane as a helical span at residues isoleucine 407 to proline 427. The Cytoplasmic segment spans residues lysine 428–alanine 436. The chain crosses the membrane as a helical span at residues leucine 437–isoleucine 457. The Extracellular portion of the chain corresponds to glutamate 458–aspartate 472. A helical transmembrane segment spans residues leucine 473–phenylalanine 493. The Cytoplasmic segment spans residues threonine 494 to threonine 495. Residues leucine 496–proline 516 form a helical membrane-spanning segment. At glutamate 517–alanine 541 the chain is on the extracellular side.

This sequence belongs to the major facilitator (TC 2.A.1) superfamily. Organic cation transporter (TC 2.A.1.19) family. Detected in fetal and adult liver, and in adult kidney.

It is found in the membrane. In Homo sapiens (Human), this protein is Solute carrier family 22 member 10 (SLC22A10).